Consider the following 559-residue polypeptide: Small ribosomal subunit protein bS1 (559 aa).

S1 motif domains are found at residues 21–87, 105–171, 192–260, 277–347, 364–434, and 451–520; these read GAII…LSRE, DEVV…VSRR, GQQV…LGLK, GTRV…LGIK, GDRI…LGIK, and GSIV…LSVK.

It belongs to the bacterial ribosomal protein bS1 family.

In terms of biological role, binds mRNA; thus facilitating recognition of the initiation point. It is needed to translate mRNA with a short Shine-Dalgarno (SD) purine-rich sequence. This Pseudomonas aeruginosa (strain ATCC 15692 / DSM 22644 / CIP 104116 / JCM 14847 / LMG 12228 / 1C / PRS 101 / PAO1) protein is Small ribosomal subunit protein bS1 (rpsA).